The following is a 127-amino-acid chain: Fluoride-specific ion channel FluC (127 aa).

4 helical membrane-spanning segments follow: residues 4–24, 35–55, 71–91, and 103–123; these read LLLA…MLSM, IGTL…FAWF, TGFC…VFLL, and VLIN…LFSA. Residues glycine 75 and threonine 78 each coordinate Na(+).

It belongs to the fluoride channel Fluc/FEX (TC 1.A.43) family.

Its subcellular location is the cell inner membrane. The enzyme catalyses fluoride(in) = fluoride(out). Na(+) is not transported, but it plays an essential structural role and its presence is essential for fluoride channel function. Functionally, fluoride-specific ion channel. Important for reducing fluoride concentration in the cell, thus reducing its toxicity. This chain is Fluoride-specific ion channel FluC, found in Salmonella agona (strain SL483).